Reading from the N-terminus, the 312-residue chain is MTKSVTVKDLKERLNLELICSETGLERPISTSDLSRPGLELTGFFSYYPEDRVQLFGMTEISFSEGMEPEERLKRYKQMCTKRTPAFVISRNLEVPKELVAAAKEADIPVLRSRLKTTRLSVYITNYLESRLAPVISMHGVLVDIYGLGVLITGSSGVGKSETALELVKRGHRLVADDNVEIRQEDEMTLIGSSPAIIEHLLEIRGLGIINVMTLFGAGAVRSSKKITIVVHLENWDPDKHYDRVGLDQEKTKIFDMDIPKITVPVRPGRNLSVIIEVAAMNFRLKNMGYNAAEQFTQDLNNLIGHNSSMND.

Active-site residues include His-139 and Lys-160. Position 154–161 (154–161 (GSSGVGKS)) interacts with ATP. Ser-161 contacts Mg(2+). Asp-178 acts as the Proton acceptor; for phosphorylation activity. Proton donor; for dephosphorylation activity in catalysis. Residues 202 to 211 (LEIRGLGIIN) are important for the catalytic mechanism of both phosphorylation and dephosphorylation. Glu-203 contributes to the Mg(2+) binding site. Arg-244 is a catalytic residue. An important for the catalytic mechanism of dephosphorylation region spans residues 265–270 (PVRPGR).

Belongs to the HPrK/P family. In terms of assembly, homohexamer. It depends on Mg(2+) as a cofactor.

The catalysed reaction is [HPr protein]-L-serine + ATP = [HPr protein]-O-phospho-L-serine + ADP + H(+). It catalyses the reaction [HPr protein]-O-phospho-L-serine + phosphate + H(+) = [HPr protein]-L-serine + diphosphate. Its function is as follows. Catalyzes the ATP- as well as the pyrophosphate-dependent phosphorylation of a specific serine residue in HPr, a phosphocarrier protein of the phosphoenolpyruvate-dependent sugar phosphotransferase system (PTS). HprK/P also catalyzes the pyrophosphate-producing, inorganic phosphate-dependent dephosphorylation (phosphorolysis) of seryl-phosphorylated HPr (P-Ser-HPr). The two antagonistic activities of HprK/P are regulated by several intracellular metabolites, which change their concentration in response to the absence or presence of rapidly metabolisable carbon sources (glucose, fructose, etc.) in the growth medium. Therefore, by controlling the phosphorylation state of HPr, HPrK/P is a sensor enzyme that plays a major role in the regulation of carbon metabolism and sugar transport: it mediates carbon catabolite repression (CCR), and regulates PTS-catalyzed carbohydrate uptake and inducer exclusion. This Listeria monocytogenes serotype 4b (strain CLIP80459) protein is HPr kinase/phosphorylase.